A 256-amino-acid chain; its full sequence is MPGLKITLLQQPLVWMDGPANLRHFDRQLEGITGRDVIVLPEMFTSGFAMEAAASSLAQDDVVNWMTAKAQQCNALIAGSVALQTESGSVNRFLLVEPGGTVHFYDKRHLFRMVDEHLHYKAGNARVIVEWRGWRILPLVCYDLRFPVWSRNLNDYDLALYVANWPAPRSLHWQALLTARAIENQAYVAGCNRVGSDGNGCHYRGDSRVINPQGEIIATADAHQATRIDAELSMAALREYREKFPAWQDADEFRLW.

In terms of domain architecture, CN hydrolase spans 4 to 234 (LKITLLQQPL…ATRIDAELSM (231 aa)). Glutamate 42 serves as the catalytic Proton acceptor. The active site involves lysine 107. Cysteine 141 serves as the catalytic Nucleophile.

Belongs to the carbon-nitrogen hydrolase superfamily. NIT1/NIT2 family.

The enzyme catalyses a monoamide of a dicarboxylate + H2O = a dicarboxylate + NH4(+). Its function is as follows. Hydrolyzes alpha-ketoglutaramate (a-KGM) to alpha-ketoglutarate (alpha-KG) and ammonia (specific activity 6.65 umol/min/mg), has weak activity on L-glutamine, almost no activity on deaminated glutathione (dGSH) and none on glutathione. May function as a metabolite repair enzyme. This chain is Omega-amidase YafV (yafV), found in Escherichia coli (strain B / BL21-DE3).